Consider the following 225-residue polypeptide: Small ribosomal subunit protein eS1 (225 aa).

The protein belongs to the eukaryotic ribosomal protein eS1 family.

The chain is Small ribosomal subunit protein eS1 from Methanococcus maripaludis (strain DSM 14266 / JCM 13030 / NBRC 101832 / S2 / LL).